The following is a 131-amino-acid chain: D-ribose pyranase (131 aa).

The active-site Proton donor is the histidine 20. Substrate-binding positions include aspartate 28, histidine 98, and 120 to 122 (YSN).

The protein belongs to the RbsD / FucU family. RbsD subfamily. As to quaternary structure, homodecamer.

Its subcellular location is the cytoplasm. It carries out the reaction beta-D-ribopyranose = beta-D-ribofuranose. Its pathway is carbohydrate metabolism; D-ribose degradation; D-ribose 5-phosphate from beta-D-ribopyranose: step 1/2. Catalyzes the interconversion of beta-pyran and beta-furan forms of D-ribose. The polypeptide is D-ribose pyranase (Lactiplantibacillus plantarum (strain ATCC BAA-793 / NCIMB 8826 / WCFS1) (Lactobacillus plantarum)).